Consider the following 211-residue polypeptide: MSAPKLALCVEDSGYEIAFAGRSNAGKSSAINALTNQKQLARASKKPGRTQMINFFSLGNPDQRLVDLPGYGYAAVPEDMKRVWQKELENYLIHRKSLQGLVLLMDIRHPLQHFDMMMLEWAYSRHLFVHILLTKADKLNRGPANKVLLEVKQQLKKMKLDFSIQLFSSLNKLGLEELASVMAGRLHFTLEQQPEFDVDAIPEASDEDAEE.

One can recognise an EngB-type G domain in the interval 13–188 (SGYEIAFAGR…ASVMAGRLHF (176 aa)). GTP contacts are provided by residues 21–28 (GRSNAGKS), 48–52 (GRTQM), 67–70 (DLPG), 134–137 (TKAD), and 167–169 (FSS). 2 residues coordinate Mg(2+): serine 28 and threonine 50.

Belongs to the TRAFAC class TrmE-Era-EngA-EngB-Septin-like GTPase superfamily. EngB GTPase family. Mg(2+) is required as a cofactor.

In terms of biological role, necessary for normal cell division and for the maintenance of normal septation. The chain is Probable GTP-binding protein EngB from Acinetobacter baumannii (strain ATCC 17978 / DSM 105126 / CIP 53.77 / LMG 1025 / NCDC KC755 / 5377).